The primary structure comprises 659 residues: Macrolide export ATP-binding/permease protein MacB (659 aa).

Residues 10–249 (IELRGIRKRY…QPLLHHAGLS (240 aa)) form the ABC transporter domain. ATP is bound at residue 47–54 (GSSGSGKS). The next 4 helical transmembrane spans lie at 287–307 (SLTL…LAIG), 538–558 (LGLV…NVML), 594–614 (ITGG…LVFW), and 619–639 (VFSF…GLIF).

This sequence belongs to the ABC transporter superfamily. Macrolide exporter (TC 3.A.1.122) family. As to quaternary structure, homodimer.

It localises to the cell inner membrane. Its function is as follows. Non-canonical ABC transporter that contains transmembrane domains (TMD), which form a pore in the inner membrane, and an ATP-binding domain (NBD), which is responsible for energy generation. Confers resistance against macrolides. In Nitrosomonas europaea (strain ATCC 19718 / CIP 103999 / KCTC 2705 / NBRC 14298), this protein is Macrolide export ATP-binding/permease protein MacB.